The primary structure comprises 216 residues: Histone doublet H4-H3 (216 aa).

Basic residues predominate over residues M1–Q12. The interval M1 to G23 is disordered.

The protein localises to the host nucleus. It is found in the host cytoplasm. It localises to the virion. In terms of biological role, histone-like protein that is recruited to viral factories during viral replication and participates in viral DNA packaging and virion production probably by forming unstable nucleosome-like particles. May compact the viral DNA. The protein is Histone doublet H4-H3 of Melbournevirus (MelV).